Consider the following 299-residue polypeptide: Tyrosine recombinase XerC (299 aa).

The 85-residue stretch at 1–85 folds into the Core-binding (CB) domain; it reads MERQLDAYCE…AVRGLYHYLN (85 aa). A Tyr recombinase domain is found at 106-285; the sequence is RLPKTLDTDR…DFQHLAAVYD (180 aa). Residues Arg146, Lys170, His237, Arg240, and His263 contribute to the active site. Tyr272 (O-(3'-phospho-DNA)-tyrosine intermediate) is an active-site residue.

The protein belongs to the 'phage' integrase family. XerC subfamily. Forms a cyclic heterotetrameric complex composed of two molecules of XerC and two molecules of XerD.

The protein resides in the cytoplasm. In terms of biological role, site-specific tyrosine recombinase, which acts by catalyzing the cutting and rejoining of the recombining DNA molecules. The XerC-XerD complex is essential to convert dimers of the bacterial chromosome into monomers to permit their segregation at cell division. It also contributes to the segregational stability of plasmids. The polypeptide is Tyrosine recombinase XerC (Pseudomonas fluorescens (strain Pf0-1)).